Here is a 575-residue protein sequence, read N- to C-terminus: G2/mitotic-specific cyclin-B3 (575 aa).

The D-box signature appears at 75 to 83; the sequence is RSALGNLTN. Residue serine 215 is modified to Phosphoserine.

This sequence belongs to the cyclin family. Cyclin AB subfamily. Interacts with Cdk1 kinase. Post-translationally, ubiquitinated. Ubiquitination leads to its degradation in early anaphase. In embryo, it is expressed in all mitotically proliferating cells, with a high level in neuroblasts. Not expressed in old embryos and thereafter. Not expressed in endoreplicating tissues.

The protein resides in the nucleus. Its function is as follows. Cyclins are positive regulatory subunits of the cyclin-dependent kinases (CDKs), and thereby play an essential role in the control of the cell cycle, notably via their destruction during cell division. Probably functions redundantly with other cyclins in regulation of cell cycle. Its presence may be required to delay a deadline for completing cytokinesis that is ordinary imposed by nuclear envelope reformation. Degradation of CycB and CycB3 promote cytokinesis furrow initiation and ingression. Required with CycB for female fertility. The protein is G2/mitotic-specific cyclin-B3 (CycB3) of Drosophila melanogaster (Fruit fly).